The following is a 969-amino-acid chain: Isoleucine--tRNA ligase (969 aa).

The short motif at 70–80 (PYANGAIHIGH) is the 'HIGH' region element. An L-isoleucyl-5'-AMP-binding site is contributed by Glu-601. The 'KMSKS' region motif lies at 642–646 (KMSKS). Lys-645 contacts ATP.

Belongs to the class-I aminoacyl-tRNA synthetase family. IleS type 1 subfamily. In terms of assembly, monomer.

The protein resides in the cytoplasm. It carries out the reaction tRNA(Ile) + L-isoleucine + ATP = L-isoleucyl-tRNA(Ile) + AMP + diphosphate. Functionally, catalyzes the attachment of isoleucine to tRNA(Ile). As IleRS can inadvertently accommodate and process structurally similar amino acids such as valine, to avoid such errors it has two additional distinct tRNA(Ile)-dependent editing activities. One activity is designated as 'pretransfer' editing and involves the hydrolysis of activated Val-AMP. The other activity is designated 'posttransfer' editing and involves deacylation of mischarged Val-tRNA(Ile). The chain is Isoleucine--tRNA ligase from Caulobacter vibrioides (strain ATCC 19089 / CIP 103742 / CB 15) (Caulobacter crescentus).